The following is a 771-amino-acid chain: Ribonucleoside-diphosphate reductase large subunit (771 aa).

The 92-residue stretch at 1–92 (MFVIKRNGYK…ISNLHKETKK (92 aa)) folds into the ATP-cone domain. Residues 5 to 6 (KR), 11 to 17 (ENVMFDK), Thr-53, Asp-57, and Lys-88 each bind ATP. GDP-binding residues include Ser-202 and Ser-217. DTTP-binding positions include 226 to 228 (DSI), Lys-243, and Arg-256. Asn-427 contributes to the GDP binding site. Asn-427 functions as the Proton acceptor in the catalytic mechanism. Cys-429 serves as the catalytic Cysteine radical intermediate. GDP is bound by residues Glu-431 and 603 to 606 (TAST). Catalysis depends on Glu-431, which acts as the Proton acceptor.

The protein belongs to the ribonucleoside diphosphate reductase large chain family. Interacts with RNR2/OPG047 subunit. It depends on Mg(2+) as a cofactor.

The catalysed reaction is a 2'-deoxyribonucleoside 5'-diphosphate + [thioredoxin]-disulfide + H2O = a ribonucleoside 5'-diphosphate + [thioredoxin]-dithiol. Functionally, ribonucleoside-diphosphate reductase holoenzyme provides the precursors necessary for viral DNA synthesis. Allows virus growth in non-dividing cells. Catalyzes the biosynthesis of deoxyribonucleotides from the corresponding ribonucleotides. The protein is Ribonucleoside-diphosphate reductase large subunit (OPG080) of Monkeypox virus.